Here is a 188-residue protein sequence, read N- to C-terminus: Photosystem I assembly protein Ycf4 (188 aa).

2 helical membrane-spanning segments follow: residues 22-42 (LGWASVLLLGTSGFLLTGLSS) and 68-88 (LVMCFYGIAGLFLSTYLWCAI).

It belongs to the Ycf4 family.

Its subcellular location is the plastid. The protein localises to the chloroplast thylakoid membrane. Functionally, seems to be required for the assembly of the photosystem I complex. This chain is Photosystem I assembly protein Ycf4, found in Zygnema circumcarinatum (Green alga).